The sequence spans 190 residues: Pyridoxal 5'-phosphate synthase subunit PdxT (190 aa).

L-glutamine is bound at residue 46–48; that stretch reads GES. C78 serves as the catalytic Nucleophile. Residues R105 and 134–135 each bind L-glutamine; that span reads IR. Residues H170 and E172 each act as charge relay system in the active site.

The protein belongs to the glutaminase PdxT/SNO family. In terms of assembly, in the presence of PdxS, forms a dodecamer of heterodimers. Only shows activity in the heterodimer.

It carries out the reaction aldehydo-D-ribose 5-phosphate + D-glyceraldehyde 3-phosphate + L-glutamine = pyridoxal 5'-phosphate + L-glutamate + phosphate + 3 H2O + H(+). The enzyme catalyses L-glutamine + H2O = L-glutamate + NH4(+). Its pathway is cofactor biosynthesis; pyridoxal 5'-phosphate biosynthesis. Catalyzes the hydrolysis of glutamine to glutamate and ammonia as part of the biosynthesis of pyridoxal 5'-phosphate. The resulting ammonia molecule is channeled to the active site of PdxS. This is Pyridoxal 5'-phosphate synthase subunit PdxT from Clostridium beijerinckii (strain ATCC 51743 / NCIMB 8052) (Clostridium acetobutylicum).